We begin with the raw amino-acid sequence, 386 residues long: Phosphoglycerate kinase (386 aa).

Residues 21–23 (DLN), R36, 59–62 (HLGR), R113, and R146 each bind substrate. ATP is bound by residues K197, E313, and 339–342 (GGDT).

Belongs to the phosphoglycerate kinase family. Monomer.

Its subcellular location is the cytoplasm. The catalysed reaction is (2R)-3-phosphoglycerate + ATP = (2R)-3-phospho-glyceroyl phosphate + ADP. It functions in the pathway carbohydrate degradation; glycolysis; pyruvate from D-glyceraldehyde 3-phosphate: step 2/5. This chain is Phosphoglycerate kinase, found in Serratia proteamaculans (strain 568).